The chain runs to 198 residues: Probable chemoreceptor glutamine deamidase CheD (198 aa).

The protein belongs to the CheD family.

It carries out the reaction L-glutaminyl-[protein] + H2O = L-glutamyl-[protein] + NH4(+). Its function is as follows. Probably deamidates glutamine residues to glutamate on methyl-accepting chemotaxis receptors (MCPs), playing an important role in chemotaxis. In Stenotrophomonas maltophilia (strain R551-3), this protein is Probable chemoreceptor glutamine deamidase CheD.